The chain runs to 200 residues: NADH-quinone oxidoreductase subunit C (200 aa).

It belongs to the complex I 30 kDa subunit family. In terms of assembly, NDH-1 is composed of 14 different subunits. Subunits NuoB, C, D, E, F, and G constitute the peripheral sector of the complex.

The protein resides in the cell inner membrane. The enzyme catalyses a quinone + NADH + 5 H(+)(in) = a quinol + NAD(+) + 4 H(+)(out). NDH-1 shuttles electrons from NADH, via FMN and iron-sulfur (Fe-S) centers, to quinones in the respiratory chain. The immediate electron acceptor for the enzyme in this species is believed to be ubiquinone. Couples the redox reaction to proton translocation (for every two electrons transferred, four hydrogen ions are translocated across the cytoplasmic membrane), and thus conserves the redox energy in a proton gradient. The chain is NADH-quinone oxidoreductase subunit C from Burkholderia thailandensis (strain ATCC 700388 / DSM 13276 / CCUG 48851 / CIP 106301 / E264).